A 272-amino-acid chain; its full sequence is Cerberus (272 aa).

A signal peptide spans 1–19 (MSLLLLQLLVLSCLGDTEP). Cystine bridges form between Cys-168–Cys-215, Cys-182–Cys-229, Cys-192–Cys-245, and Cys-196–Cys-247. A CTCK domain is found at 168-253 (CRTLPFSQSV…ECNCETQKIE (86 aa)). The N-linked (GlcNAc...) asparagine glycan is linked to Asn-228.

The protein belongs to the DAN family.

It localises to the secreted. Its function is as follows. Cytokine that acts as a regulator of the activity of Nodal/BMP pathways during the establishment of bilateral asymmetry in the head and trunk of the embryo. This chain is Cerberus (CER1), found in Gallus gallus (Chicken).